Here is a 361-residue protein sequence, read N- to C-terminus: Peptide chain release factor 1 (361 aa).

Position 236 is an N5-methylglutamine (Gln-236).

It belongs to the prokaryotic/mitochondrial release factor family. Methylated by PrmC. Methylation increases the termination efficiency of RF1.

The protein resides in the cytoplasm. Peptide chain release factor 1 directs the termination of translation in response to the peptide chain termination codons UAG and UAA. The chain is Peptide chain release factor 1 from Levilactobacillus brevis (strain ATCC 367 / BCRC 12310 / CIP 105137 / JCM 1170 / LMG 11437 / NCIMB 947 / NCTC 947) (Lactobacillus brevis).